The chain runs to 151 residues: Small ribosomal subunit protein uS15 (151 aa).

Positions 1–20 (MARLHSGKRGSSGSTRPLRT) are disordered.

It belongs to the universal ribosomal protein uS15 family. Part of the 30S ribosomal subunit.

The protein is Small ribosomal subunit protein uS15 of Methanococcus maripaludis (strain DSM 14266 / JCM 13030 / NBRC 101832 / S2 / LL).